We begin with the raw amino-acid sequence, 299 residues long: Ribosomal protein L11 methyltransferase (299 aa).

The S-adenosyl-L-methionine site is built by T139, G163, D185, and N232.

It belongs to the methyltransferase superfamily. PrmA family.

It localises to the cytoplasm. The catalysed reaction is L-lysyl-[protein] + 3 S-adenosyl-L-methionine = N(6),N(6),N(6)-trimethyl-L-lysyl-[protein] + 3 S-adenosyl-L-homocysteine + 3 H(+). Methylates ribosomal protein L11. The protein is Ribosomal protein L11 methyltransferase of Crocosphaera subtropica (strain ATCC 51142 / BH68) (Cyanothece sp. (strain ATCC 51142)).